The following is a 312-amino-acid chain: Glyoxylate/hydroxypyruvate reductase A (312 aa).

Arginine 227 is an active-site residue. Histidine 275 functions as the Proton donor in the catalytic mechanism.

Belongs to the D-isomer specific 2-hydroxyacid dehydrogenase family. GhrA subfamily.

It localises to the cytoplasm. The enzyme catalyses glycolate + NADP(+) = glyoxylate + NADPH + H(+). The catalysed reaction is (R)-glycerate + NAD(+) = 3-hydroxypyruvate + NADH + H(+). It carries out the reaction (R)-glycerate + NADP(+) = 3-hydroxypyruvate + NADPH + H(+). Functionally, catalyzes the NADPH-dependent reduction of glyoxylate and hydroxypyruvate into glycolate and glycerate, respectively. The sequence is that of Glyoxylate/hydroxypyruvate reductase A from Salmonella typhi.